Here is a 425-residue protein sequence, read N- to C-terminus: Formyl-CoA:oxalate CoA-transferase (425 aa).

CoA-binding positions include Gln-17 to Ser-18, Arg-38, Leu-72 to Lys-75, Asn-96 to Gly-98, Arg-104, and Lys-136 to Glu-139. Residue Asp-168 is the Nucleophile of the active site. Gly-247 to Gln-249 serves as a coordination point for substrate.

Belongs to the CoA-transferase III family. Frc subfamily. In terms of assembly, homodimer.

It catalyses the reaction formyl-CoA + oxalate = oxalyl-CoA + formate. Its pathway is metabolic intermediate degradation; oxalate degradation; CO(2) and formate from oxalate: step 1/2. Its function is as follows. Involved in the catabolism of oxalate and in the adapatation to low pH via the induction of the oxalate-dependent acid tolerance response (ATR). Catalyzes the transfer of the CoA moiety from formyl-CoA to oxalate. The polypeptide is Formyl-CoA:oxalate CoA-transferase (Bradyrhizobium diazoefficiens (strain JCM 10833 / BCRC 13528 / IAM 13628 / NBRC 14792 / USDA 110)).